Consider the following 140-residue polypeptide: Nucleoside diphosphate kinase (140 aa).

Positions 11, 59, 87, 93, 104, and 114 each coordinate ATP. His117 acts as the Pros-phosphohistidine intermediate in catalysis.

Belongs to the NDK family. Homotetramer. Mg(2+) is required as a cofactor.

The protein localises to the cytoplasm. It carries out the reaction a 2'-deoxyribonucleoside 5'-diphosphate + ATP = a 2'-deoxyribonucleoside 5'-triphosphate + ADP. The catalysed reaction is a ribonucleoside 5'-diphosphate + ATP = a ribonucleoside 5'-triphosphate + ADP. Major role in the synthesis of nucleoside triphosphates other than ATP. The ATP gamma phosphate is transferred to the NDP beta phosphate via a ping-pong mechanism, using a phosphorylated active-site intermediate. In Hyphomonas neptunium (strain ATCC 15444), this protein is Nucleoside diphosphate kinase.